The sequence spans 332 residues: MNQSELIRALPKAELHVHIEGTFEPELMFEIAQRNHIDIPYKSVEEIKKAYNFHNLQSFLDIYYAGANVLINEQDFYDLAWAYFKKCAEDRVVHTEMFFDPQTHTERGVSFEIVLNGLKRACKDAKEHLGISSHLIMCFLRHLSEEDAFKTLEQALPYKADIIAVGLDSSEVGHPPSKFARVFEKAREEGFLVVAHAGEEGPPEYVWEALDLLKVNRIDHGVRSEEDPALMQRLIQEKMPLTVCPLSNLKLCVVNDMKEHNIRRLLNQGVHVTVNSDDPSYFGGYMNDNFVAIQAALDLSNEELKKLAINSFEASFIDEEEKQNWIEEINQI.

3 residues coordinate Zn(2+): histidine 16, histidine 18, and histidine 196. Glutamate 199 (proton donor) is an active-site residue. A Zn(2+)-binding site is contributed by aspartate 277. Substrate is bound at residue aspartate 278.

It belongs to the metallo-dependent hydrolases superfamily. Adenosine and AMP deaminases family. Adenine deaminase type 2 subfamily. Zn(2+) serves as cofactor.

It carries out the reaction adenine + H2O + H(+) = hypoxanthine + NH4(+). In terms of biological role, catalyzes the hydrolytic deamination of adenine to hypoxanthine. Plays an important role in the purine salvage pathway and in nitrogen catabolism. This is Adenine deaminase from Acinetobacter baylyi (strain ATCC 33305 / BD413 / ADP1).